The sequence spans 328 residues: Cytochrome f (328 aa).

Residues 1-44 form the signal peptide; that stretch reads MRNPDTLGLWTKTMVALRRFTVLAIATVSVFLITDLGLPQAASA. Heme-binding residues include Tyr-45, Cys-66, Cys-69, and His-70. The helical transmembrane segment at 296 to 313 threads the bilayer; the sequence is FLVLFLAGIMLSQILLVL.

Belongs to the cytochrome f family. The 4 large subunits of the cytochrome b6-f complex are cytochrome b6, subunit IV (17 kDa polypeptide, PetD), cytochrome f and the Rieske protein, while the 4 small subunits are PetG, PetL, PetM and PetN. The complex functions as a dimer. Requires heme as cofactor.

Its subcellular location is the cellular thylakoid membrane. Component of the cytochrome b6-f complex, which mediates electron transfer between photosystem II (PSII) and photosystem I (PSI), cyclic electron flow around PSI, and state transitions. The polypeptide is Cytochrome f (petA) (Synechocystis sp. (strain ATCC 27184 / PCC 6803 / Kazusa)).